Consider the following 598-residue polypeptide: Arylsulfate sulfotransferase AssT (598 aa).

An N-terminal signal peptide occupies residues 1 to 27 (MFDKYRKTLVAGTVAITLGLSASGVMA). 4-methylumbelliferone-binding residues include His279 and His383. An intrachain disulfide couples Cys445 to Cys451. His463 is a 4-methylumbelliferone binding site. His463 acts as the Nucleophile; sulfurylated histidine covalent intermediate in catalysis.

The protein belongs to the aryl sulfotransferase family. As to quaternary structure, homodimer. In terms of processing, the disulfide bond is crucial for enzyme activity.

It localises to the periplasm. The enzyme catalyses an aryl sulfate + a phenol = an aryl sulfate + a phenol. It catalyses the reaction 4-methylumbelliferone sulfate + phenol = phenyl sulfate + 4-methylumbelliferone. Catalyzes the transfer of a sulfate group from a phenyl sulfate ester to other phenolic compounds. In vitro, is able to use 4-methylumbelliferyl sulfate and p-nitrophenyl sulfate (PNS) as donor substrates with phenol as the acceptor substrate. Cannot use 3'-phosphoadenosine-5'-phophosulfate (PAPS), the donor substrate of mammalian sulfotransferase. The chain is Arylsulfate sulfotransferase AssT from Escherichia coli O6:H1 (strain CFT073 / ATCC 700928 / UPEC).